Here is a 197-residue protein sequence, read N- to C-terminus: Protein GrpE (197 aa).

The segment at 1–39 is disordered; sequence MSSKEQKTPEGQAPEEIIMDQHEEIEAVEPEASAEQVDP.

It belongs to the GrpE family. In terms of assembly, homodimer.

The protein resides in the cytoplasm. Functionally, participates actively in the response to hyperosmotic and heat shock by preventing the aggregation of stress-denatured proteins, in association with DnaK and GrpE. It is the nucleotide exchange factor for DnaK and may function as a thermosensor. Unfolded proteins bind initially to DnaJ; upon interaction with the DnaJ-bound protein, DnaK hydrolyzes its bound ATP, resulting in the formation of a stable complex. GrpE releases ADP from DnaK; ATP binding to DnaK triggers the release of the substrate protein, thus completing the reaction cycle. Several rounds of ATP-dependent interactions between DnaJ, DnaK and GrpE are required for fully efficient folding. The polypeptide is Protein GrpE (Escherichia coli O157:H7 (strain EC4115 / EHEC)).